The primary structure comprises 694 residues: Ferric reductase transmembrane component 5 (694 aa).

Residues 1 to 19 (MLFARLVLLLVYLAPGSLA) form the signal peptide. Residues 20–163 (KPASTKKRTQ…LDNIDKGNVY (144 aa)) lie on the Extracellular side of the membrane. N-linked (GlcNAc...) asparagine glycosylation is present at Asn-117. A helical transmembrane segment spans residues 164 to 184 (GVTICLYWIGVLFIAAVYHFL). At 185 to 222 (NFSRLKQTVFKNKVSAFLRGHYVLPALVHNHAMSVGRW) the chain is on the cytoplasmic side. A helical membrane pass occupies residues 223-243 (FFIGLVPTRLETLVLFGYVLL). Residues 244-267 (HGFLLSSYNFDHNELLSDRRSQVL) are Extracellular-facing. A helical membrane pass occupies residues 268–288 (IFLSDRAGILAFAHFPLIVLF). The 135-residue stretch at 274-408 (AGILAFAHFP…GWGEWIMACA (135 aa)) folds into the Ferric oxidoreductase domain. Residues 289 to 311 (GGKNSTMTWLTGIRYTAFITYHK) lie on the Cytoplasmic side of the membrane. 2 residues coordinate heme: His-310 and His-324. The helical transmembrane segment at 312 to 334 (WLGRFMLVDCTIHAIGYTYHAYI) threads the bilayer. Residues 335–347 (ENYWKYVKYSDLW) lie on the Extracellular side of the membrane. The chain crosses the membrane as a helical span at residues 348-368 (TSGRHAMIIVGILVFFSFFFF). The Cytoplasmic portion of the chain corresponds to 369 to 371 (RRH). A helical membrane pass occupies residues 372–392 (YYELFVITHIILAIGFFHACW). Heme contacts are provided by His-380 and His-394. The Extracellular segment spans residues 393-403 (KHCYKLGWGEW). The chain crosses the membrane as a helical span at residues 404-424 (IMACALFWIADRILRLIKIAI). Residues 409 to 528 (LFWIADRILR…EGPYGQSTRT (120 aa)) form the FAD-binding FR-type domain. The Cytoplasmic portion of the chain corresponds to 425 to 694 (FGMPWAKLKL…IEYVEEFQNW (270 aa)). 473–479 (HPFTVMD) serves as a coordination point for FAD. Residues 520-523 (GPYG) and 660-661 (CG) contribute to the NADP(+) site.

It belongs to the ferric reductase (FRE) family. Requires FAD as cofactor.

It localises to the cell membrane. It catalyses the reaction 2 a Fe(II)-siderophore + NADP(+) + H(+) = 2 a Fe(III)-siderophore + NADPH. Functionally, metalloreductase responsible for reducing extracellular iron and copper prior to import. Catalyzes the reductive uptake of Fe(3+)-salts and Fe(3+) bound to catecholate or hydroxamate siderophores. Fe(3+) is reduced to Fe(2+), which then dissociates from the siderophore and can be imported by the high-affinity Fe(2+) transport complex in the plasma membrane. The polypeptide is Ferric reductase transmembrane component 5 (FRE5) (Saccharomyces cerevisiae (strain ATCC 204508 / S288c) (Baker's yeast)).